The following is a 734-amino-acid chain: Photosystem I P700 chlorophyll a apoprotein A2 (734 aa).

8 helical membrane-spanning segments follow: residues 46 to 69 (IFAS…FHVA), 135 to 158 (LYIG…LHLQ), 175 to 199 (LNHH…HVAL), 273 to 291 (IAHH…GHMY), 330 to 353 (LHFQ…QHMY), 369 to 395 (AALY…IFFI), 417 to 439 (AIIS…LYVH), and 517 to 535 (FLVH…LILV). Cys-559 and Cys-568 together coordinate [4Fe-4S] cluster. A run of 2 helical transmembrane segments spans residues 575-596 (AFYL…YWHW) and 643-665 (LSVW…MFLI). Positions 654, 662, and 670 each coordinate chlorophyll a. Trp-671 serves as a coordination point for phylloquinone. A helical transmembrane segment spans residues 707-727 (LVGLVHFSVGYIFTYAAFLIA).

It belongs to the PsaA/PsaB family. As to quaternary structure, the PsaA/B heterodimer binds the P700 chlorophyll special pair and subsequent electron acceptors. PSI consists of a core antenna complex that captures photons, and an electron transfer chain that converts photonic excitation into a charge separation. The eukaryotic PSI reaction center is composed of at least 11 subunits. Requires P700 is a chlorophyll a/chlorophyll a' dimer, A0 is one or more chlorophyll a, A1 is one or both phylloquinones and FX is a shared 4Fe-4S iron-sulfur center. as cofactor.

The protein resides in the plastid. It is found in the chloroplast thylakoid membrane. It carries out the reaction reduced [plastocyanin] + hnu + oxidized [2Fe-2S]-[ferredoxin] = oxidized [plastocyanin] + reduced [2Fe-2S]-[ferredoxin]. Its function is as follows. PsaA and PsaB bind P700, the primary electron donor of photosystem I (PSI), as well as the electron acceptors A0, A1 and FX. PSI is a plastocyanin-ferredoxin oxidoreductase, converting photonic excitation into a charge separation, which transfers an electron from the donor P700 chlorophyll pair to the spectroscopically characterized acceptors A0, A1, FX, FA and FB in turn. Oxidized P700 is reduced on the lumenal side of the thylakoid membrane by plastocyanin. The chain is Photosystem I P700 chlorophyll a apoprotein A2 from Gnetum parvifolium (Small-leaved jointfir).